Consider the following 145-residue polypeptide: uncharacterized protein (145 aa).

Transmembrane regions (helical) follow at residues V3–G23, Y83–P103, and L105–I125.

The protein resides in the cell membrane. This is an uncharacterized protein from Methanocaldococcus jannaschii (strain ATCC 43067 / DSM 2661 / JAL-1 / JCM 10045 / NBRC 100440) (Methanococcus jannaschii).